Consider the following 202-residue polypeptide: Heart- and neural crest derivatives-expressed protein 1 (202 aa).

The region spanning 83-135 (RKGVGGPKKERRRTESINSAFAELRECIPNVPADTKLSKIKTLRLATSYIAYL) is the bHLH domain. Residues 143–187 (SQPGEPEGFKAELKKADGRENKRKRETQPEVYSQPLAHGEKKLKG) are disordered. The span at 149–162 (EGFKAELKKADGRE) shows a compositional bias: basic and acidic residues.

In terms of assembly, efficient DNA binding requires dimerization with another bHLH protein.

The protein localises to the nucleus. It localises to the nucleoplasm. Its subcellular location is the nucleolus. In terms of biological role, transcription factor. Plays an essential role in cardiac morphogenesis. This is Heart- and neural crest derivatives-expressed protein 1 (HAND1) from Gallus gallus (Chicken).